The primary structure comprises 199 residues: Golgi to ER traffic protein 1 (199 aa).

Residues 1–11 (MLLPDLHPYTI) are Lumenal-facing. A helical transmembrane segment spans residues 12–31 (LLSIFIVLLLKQLVASIGKS). Residues 32-115 (TIKEFVWLVY…SIDKVSNALL (84 aa)) lie on the Cytoplasmic side of the membrane. Positions 66–116 (EKRAISAQDEYAKWTKLNRQADKLSAELQKLNQEIQQQKASIDKVSNALLL) form a coiled coil. The chain crosses the membrane as a helical span at residues 116–136 (LVLTTLPIWVARVLYRNTHLF). Residues 137–160 (YIRQGIFPKYVEWVLALPFLPNGA) lie on the Lumenal side of the membrane. Residues 161–177 (VGLTIWMFAVNSVVSNF) traverse the membrane as a helical segment. Topologically, residues 178–199 (AFLVSFPFAKKVSKPVRDTKIE) are cytoplasmic.

It belongs to the WRB/GET1 family. In terms of assembly, component of the Golgi to ER traffic (GET) complex, which is composed of GET1, GET2 and GET3. Within the complex, GET1 and GET2 form a heterotetramer which is stabilized by phosphatidylinositol binding and which binds to the GET3 homodimer.

Its subcellular location is the endoplasmic reticulum membrane. It is found in the golgi apparatus membrane. Required for the post-translational delivery of tail-anchored (TA) proteins to the endoplasmic reticulum. Together with GET2, acts as a membrane receptor for soluble GET3, which recognizes and selectively binds the transmembrane domain of TA proteins in the cytosol. The GET complex cooperates with the HDEL receptor ERD2 to mediate the ATP-dependent retrieval of resident ER proteins that contain a C-terminal H-D-E-L retention signal from the Golgi to the ER. The polypeptide is Golgi to ER traffic protein 1 (Candida dubliniensis (strain CD36 / ATCC MYA-646 / CBS 7987 / NCPF 3949 / NRRL Y-17841) (Yeast)).